The sequence spans 489 residues: Glycogen synthase (489 aa).

Arg20 is an ADP-alpha-D-glucose binding site.

This sequence belongs to the glycosyltransferase 1 family. Bacterial/plant glycogen synthase subfamily.

The catalysed reaction is [(1-&gt;4)-alpha-D-glucosyl](n) + ADP-alpha-D-glucose = [(1-&gt;4)-alpha-D-glucosyl](n+1) + ADP + H(+). It participates in glycan biosynthesis; glycogen biosynthesis. Its function is as follows. Synthesizes alpha-1,4-glucan chains using ADP-glucose. This chain is Glycogen synthase, found in Chlorobium phaeovibrioides (strain DSM 265 / 1930) (Prosthecochloris vibrioformis (strain DSM 265)).